Consider the following 328-residue polypeptide: Fructose-1,6-bisphosphatase class 1 (328 aa).

Residues glutamate 89, aspartate 110, leucine 112, and aspartate 113 each contribute to the Mg(2+) site. Residues asparagine 206, tyrosine 234, 252–254 (YLY), and lysine 264 each bind substrate. A Mg(2+)-binding site is contributed by glutamate 270.

It belongs to the FBPase class 1 family. In terms of assembly, homotetramer. Mg(2+) is required as a cofactor.

Its subcellular location is the cytoplasm. It catalyses the reaction beta-D-fructose 1,6-bisphosphate + H2O = beta-D-fructose 6-phosphate + phosphate. Its pathway is carbohydrate biosynthesis; gluconeogenesis. This is Fructose-1,6-bisphosphatase class 1 from Wigglesworthia glossinidia brevipalpis.